The following is a 186-amino-acid chain: Small ribosomal subunit protein uS5 (186 aa).

Residues 18-81 form the S5 DRBM domain; the sequence is FVDKLVHINR…EAAKRAMIRV (64 aa).

It belongs to the universal ribosomal protein uS5 family. As to quaternary structure, part of the 30S ribosomal subunit. Contacts proteins S4 and S8.

With S4 and S12 plays an important role in translational accuracy. Its function is as follows. Located at the back of the 30S subunit body where it stabilizes the conformation of the head with respect to the body. The sequence is that of Small ribosomal subunit protein uS5 from Parvibaculum lavamentivorans (strain DS-1 / DSM 13023 / NCIMB 13966).